The chain runs to 434 residues: 4-hydroxy-3-methylbut-2-en-1-yl diphosphate synthase (flavodoxin) (434 aa).

Over residues 1–15 (MQSEAQSPRSSQICS) the composition is skewed to polar residues. The interval 1 to 24 (MQSEAQSPRSSQICSTEPVFGGHQ) is disordered. Residues cysteine 322, cysteine 325, cysteine 368, and glutamate 375 each coordinate [4Fe-4S] cluster.

The protein belongs to the IspG family. It depends on [4Fe-4S] cluster as a cofactor.

It carries out the reaction (2E)-4-hydroxy-3-methylbut-2-enyl diphosphate + oxidized [flavodoxin] + H2O + 2 H(+) = 2-C-methyl-D-erythritol 2,4-cyclic diphosphate + reduced [flavodoxin]. The protein operates within isoprenoid biosynthesis; isopentenyl diphosphate biosynthesis via DXP pathway; isopentenyl diphosphate from 1-deoxy-D-xylulose 5-phosphate: step 5/6. In terms of biological role, converts 2C-methyl-D-erythritol 2,4-cyclodiphosphate (ME-2,4cPP) into 1-hydroxy-2-methyl-2-(E)-butenyl 4-diphosphate. The protein is 4-hydroxy-3-methylbut-2-en-1-yl diphosphate synthase (flavodoxin) of Burkholderia cenocepacia (strain ATCC BAA-245 / DSM 16553 / LMG 16656 / NCTC 13227 / J2315 / CF5610) (Burkholderia cepacia (strain J2315)).